A 717-amino-acid chain; its full sequence is MIHAGNAITVQMLADGIAEFRFDLQGESVNKFNRATIEDFKAAIAAVKANNDIKGLVVTSGKSTFIVGADITEFGQNFAQGEKAIVDWLMPVHEIFNSFEDLDLPKVAAINGMALGGGFEMCLVCDYRVMSEAAQVGLPEIKLGIYPGFGGSVRLSRLIGIDNAVEWMAMATPKKPAAALKDGAVDAVVAADKLLDAATDLVKQAISGRLNWKAKRQEKLEAVKLNPLEQMMAFNTAKGAVLAKANPAQYPAPKLLLDSLQAGASLARDEALKAEAEGFAKAAVTPQAEALIGLFINDQVVKKASKQHEKGAHPVNQAAVLGAGIMGGGIAYQAASKGTPIIMKDIGNPQLALGMKEANNLLTKQVERKKMKPVQMGETLARIRPTLSYEEFKEVDIVIEAVTENPKVKEIVLAETEKNVRENTIIASNTSTISITRLAKALQRPENFVGMHFFNPVHMMPLVEVIRGEKTSEEAIATTVVLAQKMGKTPIVVNDCPGFLVNRVLFPYFGAFDLLVKDGADFQQIDNVMSKFGWPMGPAYLIDVVGIDTGVHGAEVMAEGFPDRMKPDYKGAIEAMYEAKRLGQKNDVGFYKYELDKKGKKAKTVDPTAYEVIAPFVTGEKREFDNQEIIDRMMLALCNETVRCLEDNIVATASEADMAMIMGIGFPPFRGGPCRYIDQTGVAEYVALCDKYAHLGKAYEAPQMLRDMAANNKKFYG.

The enoyl-CoA hydratase/isomerase stretch occupies residues 1-190 (MIHAGNAITV…KDGAVDAVVA (190 aa)). Substrate is bound at residue D298. The segment at 313-717 (HPVNQAAVLG…MAANNKKFYG (405 aa)) is 3-hydroxyacyl-CoA dehydrogenase. NAD(+) contacts are provided by residues M326, D345, 402 to 404 (VTE), K409, and S431. The active-site For 3-hydroxyacyl-CoA dehydrogenase activity is the H452. N455 contacts NAD(+). Residue N502 coordinates substrate.

This sequence in the N-terminal section; belongs to the enoyl-CoA hydratase/isomerase family. In the C-terminal section; belongs to the 3-hydroxyacyl-CoA dehydrogenase family. Heterotetramer of two alpha chains (FadB) and two beta chains (FadA).

It catalyses the reaction a (3S)-3-hydroxyacyl-CoA + NAD(+) = a 3-oxoacyl-CoA + NADH + H(+). The enzyme catalyses a (3S)-3-hydroxyacyl-CoA = a (2E)-enoyl-CoA + H2O. The catalysed reaction is a 4-saturated-(3S)-3-hydroxyacyl-CoA = a (3E)-enoyl-CoA + H2O. It carries out the reaction (3S)-3-hydroxybutanoyl-CoA = (3R)-3-hydroxybutanoyl-CoA. It catalyses the reaction a (3Z)-enoyl-CoA = a 4-saturated (2E)-enoyl-CoA. The enzyme catalyses a (3E)-enoyl-CoA = a 4-saturated (2E)-enoyl-CoA. The protein operates within lipid metabolism; fatty acid beta-oxidation. Its function is as follows. Involved in the aerobic and anaerobic degradation of long-chain fatty acids via beta-oxidation cycle. Catalyzes the formation of 3-oxoacyl-CoA from enoyl-CoA via L-3-hydroxyacyl-CoA. It can also use D-3-hydroxyacyl-CoA and cis-3-enoyl-CoA as substrate. This is Fatty acid oxidation complex subunit alpha from Acinetobacter baumannii (strain AB307-0294).